The following is a 520-amino-acid chain: Poly(A)-specific ribonuclease PNLDC1 (520 aa).

Mg(2+)-binding residues include D17, E19, D260, and D354. Residues V495–L515 traverse the membrane as a helical segment.

The protein belongs to the CAF1 family. Requires Mg(2+) as cofactor.

Its subcellular location is the endoplasmic reticulum membrane. It carries out the reaction Exonucleolytic cleavage of poly(A) to 5'-AMP.. Its function is as follows. 3'-exoribonuclease that has a preference for poly(A) tails of mRNAs, thereby efficiently degrading poly(A) tails. Exonucleolytic degradation of the poly(A) tail is often the first step in the decay of eukaryotic mRNAs and is also used to silence certain maternal mRNAs translationally during oocyte maturation and early embryonic development. May act as a regulator of multipotency in embryonic stem cells. Is a critical factor for proper spermatogenesis, involved in pre-piRNAs processing to generate mature piRNAs. The chain is Poly(A)-specific ribonuclease PNLDC1 from Homo sapiens (Human).